The sequence spans 464 residues: Soluble pyridine nucleotide transhydrogenase (464 aa).

Residue 35–44 coordinates FAD; the sequence is DSRRQVGGNC.

Belongs to the class-I pyridine nucleotide-disulfide oxidoreductase family. It depends on FAD as a cofactor.

Its subcellular location is the cytoplasm. The catalysed reaction is NAD(+) + NADPH = NADH + NADP(+). In terms of biological role, conversion of NADPH, generated by peripheral catabolic pathways, to NADH, which can enter the respiratory chain for energy generation. In Pseudomonas savastanoi pv. phaseolicola (strain 1448A / Race 6) (Pseudomonas syringae pv. phaseolicola (strain 1448A / Race 6)), this protein is Soluble pyridine nucleotide transhydrogenase.